We begin with the raw amino-acid sequence, 357 residues long: Protein NDRG2 (357 aa).

Positions 1–28 (MAELQEVQITEEKPLLPGQTPEAAKTHS) are disordered. At Ala-2 the chain carries N-acetylalanine. Position 20 is a phosphothreonine (Thr-20). Ser-312 and Ser-314 each carry phosphoserine. Phosphothreonine is present on Thr-316. Ser-318 is subject to Phosphoserine. Phosphothreonine is present on Thr-320. Positions 320-357 (TSAASVDGNRSRSRTLSQSSESGTLSSGPPGHTMEVSC) are disordered. A phosphoserine mark is found at Ser-321, Ser-324, and Ser-330. Low complexity predominate over residues 333-347 (RTLSQSSESGTLSSG). Position 334 is a phosphothreonine (Thr-334). Phosphoserine is present on residues Ser-336, Ser-338, Ser-339, and Ser-341. Position 343 is a phosphothreonine (Thr-343). A Phosphoserine modification is found at Ser-356.

This sequence belongs to the NDRG family. Interacts with CTNNB1.

The protein resides in the cytoplasm. It is found in the perinuclear region. The protein localises to the cell projection. Its subcellular location is the growth cone. Its function is as follows. Contributes to the regulation of the Wnt signaling pathway. Down-regulates CTNNB1-mediated transcriptional activation of target genes, such as CCND1, and may thereby act as tumor suppressor. May be involved in dendritic cell and neuron differentiation. The polypeptide is Protein NDRG2 (NDRG2) (Pan troglodytes (Chimpanzee)).